Consider the following 467-residue polypeptide: Neutrophil collagenase (467 aa).

Positions 1–20 are cleaved as a signal peptide; the sequence is MFSLKTLPFLLLLHVQISKA. A propeptide spans 21-100 (activation peptide); sequence FPVSSKEKNT…CGVPDSGGFM (80 aa). N-linked (GlcNAc...) asparagine glycans are attached at residues N54 and N73. The short motif at 89 to 96 is the Cysteine switch element; the sequence is PRCGVPDS. C91 contacts Zn(2+). An N-linked (GlcNAc...) asparagine glycan is attached at N112. D157 contributes to the Ca(2+) binding site. H167 and D169 together coordinate Zn(2+). The Ca(2+) site is built by D174, G175, N177, and I179. H182 serves as a coordination point for Zn(2+). G189, G191, and D193 together coordinate Ca(2+). Zn(2+) is bound at residue H195. The Ca(2+) site is built by D197 and E200. A glycan (N-linked (GlcNAc...) asparagine) is linked at N204. H217 contributes to the Zn(2+) binding site. Residue E218 is part of the active site. Residues H221 and H227 each contribute to the Zn(2+) site. The N-linked (GlcNAc...) asparagine glycan is linked to N246. 4 Hemopexin repeats span residues 276–325, 326–372, 374–420, and 421–464; these read PKPC…WPSL, PTGI…GFPS, VQAI…FPGI, and ESKV…WLNC. The cysteines at positions 279 and 464 are disulfide-linked. D286 serves as a coordination point for Ca(2+). Ca(2+)-binding residues include D378 and D425.

It belongs to the peptidase M10A family. It depends on Ca(2+) as a cofactor. The cofactor is Zn(2+). As to expression, neutrophils.

The protein resides in the cytoplasmic granule. The protein localises to the secreted. It is found in the extracellular space. It localises to the extracellular matrix. It carries out the reaction Cleavage of interstitial collagens in the triple helical domain. Unlike EC 3.4.24.7, this enzyme cleaves type III collagen more slowly than type I.. Its activity is regulated as follows. Cannot be activated without removal of the activation peptide. Functionally, can degrade fibrillar type I, II, and III collagens. The chain is Neutrophil collagenase (MMP8) from Homo sapiens (Human).